We begin with the raw amino-acid sequence, 228 residues long: Urease accessory protein UreF (228 aa).

This sequence belongs to the UreF family. In terms of assembly, ureD, UreF and UreG form a complex that acts as a GTP-hydrolysis-dependent molecular chaperone, activating the urease apoprotein by helping to assemble the nickel containing metallocenter of UreC. The UreE protein probably delivers the nickel.

Its subcellular location is the cytoplasm. In terms of biological role, required for maturation of urease via the functional incorporation of the urease nickel metallocenter. This chain is Urease accessory protein UreF, found in Yersinia enterocolitica serotype O:8 / biotype 1B (strain NCTC 13174 / 8081).